The chain runs to 258 residues: Phosphate import ATP-binding protein PstB (258 aa).

Positions 12–253 constitute an ABC transporter domain; it reads LEVKNLNFYY…PARKETEDYI (242 aa). ATP is bound at residue 44 to 51; sequence GPSGCGKS.

It belongs to the ABC transporter superfamily. Phosphate importer (TC 3.A.1.7) family. In terms of assembly, the complex is composed of two ATP-binding proteins (PstB), two transmembrane proteins (PstC and PstA) and a solute-binding protein (PstS).

The protein localises to the cell inner membrane. It carries out the reaction phosphate(out) + ATP + H2O = ADP + 2 phosphate(in) + H(+). Part of the ABC transporter complex PstSACB involved in phosphate import. Responsible for energy coupling to the transport system. This is Phosphate import ATP-binding protein PstB from Bordetella pertussis (strain Tohama I / ATCC BAA-589 / NCTC 13251).